Reading from the N-terminus, the 305-residue chain is Transcriptional activator protein PfeR (305 aa).

The region spanning 79 to 192 is the Response regulatory domain; it reads RLLLVEDDPR…ELDARTDALL (114 aa). The residue at position 128 (aspartate 128) is a 4-aspartylphosphate. The segment at residues 200–301 is a DNA-binding region (ompR/PhoB-type); it reads LPLAQRRDTR…VRGQGYLLVE (102 aa).

Phosphorylated by PfeS.

Its subcellular location is the cytoplasm. Its function is as follows. Member of the two-component regulatory system PfeR/PfeS. Activates expression of the ferric enterobactin receptor. This chain is Transcriptional activator protein PfeR (pfeR), found in Pseudomonas aeruginosa (strain ATCC 15692 / DSM 22644 / CIP 104116 / JCM 14847 / LMG 12228 / 1C / PRS 101 / PAO1).